Consider the following 568-residue polypeptide: U6 small nuclear RNA (adenine-(43)-N(6))-methyltransferase (568 aa).

The tract at residues 1 to 20 (MSEIDTNDIKKEMDNKNYRD) is disordered. Basic and acidic residues predominate over residues 7 to 20 (NDIKKEMDNKNYRD). The S-adenosyl-L-methionine site is built by Arg-117, Gly-151, Asp-175, and Asn-250. 3 disordered regions span residues 363–383 (KENN…INNN), 403–431 (NLDS…NNNN), and 503–538 (DPKI…NKNN). 3 stretches are compositionally biased toward low complexity: residues 365 to 383 (NNNI…INNN), 409 to 431 (NNNN…NNNN), and 507 to 538 (NNNN…NKNN).

The protein belongs to the methyltransferase superfamily. METTL16/RlmF family.

The enzyme catalyses adenosine in U6 snRNA + S-adenosyl-L-methionine = N(6)-methyladenosine in U6 snRNA + S-adenosyl-L-homocysteine + H(+). RNA N6-methyltransferase that mediates N6-methylation of adenine of U6 small nuclear RNA (U6 snRNA). The polypeptide is U6 small nuclear RNA (adenine-(43)-N(6))-methyltransferase (Dictyostelium discoideum (Social amoeba)).